An 86-amino-acid chain; its full sequence is DNA-directed RNA polymerase subunit omega (86 aa).

This sequence belongs to the RNA polymerase subunit omega family. As to quaternary structure, the RNAP catalytic core consists of 2 alpha, 1 beta, 1 beta' and 1 omega subunit. When a sigma factor is associated with the core the holoenzyme is formed, which can initiate transcription.

It catalyses the reaction RNA(n) + a ribonucleoside 5'-triphosphate = RNA(n+1) + diphosphate. Promotes RNA polymerase assembly. Latches the N- and C-terminal regions of the beta' subunit thereby facilitating its interaction with the beta and alpha subunits. This is DNA-directed RNA polymerase subunit omega from Psychrobacter sp. (strain PRwf-1).